A 314-amino-acid polypeptide reads, in one-letter code: Very long chain fatty acid elongase 4 (314 aa).

An N-linked (GlcNAc...) asparagine glycan is attached at Asn-20. 7 helical membrane passes run 42-62 (LMQS…FVWL), 78-98 (VLII…RELF), 127-147 (ALWW…FFIL), 165-185 (MFTL…FFGA), 188-208 (NSFI…GPWI), 217-237 (YLTM…ALSL), and 247-267 (MHWA…NFYI). Positions 274 to 314 (KKPKTGKTAMNGISANGVSKSEKQLVIENGKKQKNGKAKGD) are disordered. Residues 293-304 (KSEKQLVIENGK) are compositionally biased toward basic and acidic residues. The segment covering 305–314 (KQKNGKAKGD) has biased composition (basic residues). Residues 310–314 (KAKGD) carry the Di-lysine motif motif.

It belongs to the ELO family. ELOVL4 subfamily. In terms of assembly, oligomer. In terms of processing, N-glycosylated. In terms of tissue distribution, expressed mainly in retina. Also expressed in skin and thymus.

The protein localises to the endoplasmic reticulum membrane. It catalyses the reaction a very-long-chain acyl-CoA + malonyl-CoA + H(+) = a very-long-chain 3-oxoacyl-CoA + CO2 + CoA. The catalysed reaction is hexacosanoyl-CoA + malonyl-CoA + H(+) = 3-oxooctacosanyol-CoA + CO2 + CoA. The enzyme catalyses octacosanoyl-CoA + malonyl-CoA + H(+) = 3-oxo-triacontanoyl-CoA + CO2 + CoA. It carries out the reaction triacontanoyl-CoA + malonyl-CoA + H(+) = 3-oxo-dotriacontanoyl-CoA + CO2 + CoA. It catalyses the reaction (19Z,22Z,25Z,28Z,31Z)-tetratriacontapentaenoyl-CoA + malonyl-CoA + H(+) = 3-oxo-(21Z,24Z,27Z,30Z,33Z)-hexatriacontapentaenoyl-CoA + CO2 + CoA. The catalysed reaction is (4Z,7Z,10Z,13Z,16Z,19Z)-docosahexaenoyl-CoA + malonyl-CoA + H(+) = 3-oxo-(6Z,9Z,12Z,15Z,18Z,21Z)-tetracosahexaenoyl-CoA + CO2 + CoA. The enzyme catalyses (7Z,10Z,13Z,16Z)-docosatetraenoyl-CoA + malonyl-CoA + H(+) = (9Z,12Z,15Z,18Z)-3-oxotetracosatetraenoyl-CoA + CO2 + CoA. It carries out the reaction (11Z,14Z,17Z,20Z,23Z)-hexacosapentaenoyl-CoA + malonyl-CoA + H(+) = 3-oxo-(13Z,16Z,19Z,22Z,25Z)-octacosapentaenoyl-CoA + CO2 + CoA. It catalyses the reaction (13Z,16Z,19Z,22Z,25Z)-octacosapentaenoyl-CoA + malonyl-CoA + H(+) = 3-oxo-(15Z,18Z,21Z,24Z,27Z)-triacontapentaenoyl-CoA + CO2 + CoA. The catalysed reaction is (15Z,18Z,21Z,24Z,27Z)-triacontapentaenoyl-CoA + malonyl-CoA + H(+) = 3-oxo-(17Z,20Z,23Z,26Z,29Z)-dotriacontapentaenoyl-CoA + CO2 + CoA. The enzyme catalyses (17Z,20Z,23Z,26Z,29Z)-dotriacontapentaenoyl-CoA + malonyl-CoA + H(+) = 3-oxo-(19Z,22Z,25Z,28Z,31Z)-tetratriacontapentaenoyl-CoA + CO2 + CoA. It carries out the reaction (21Z,24Z,27Z,30Z,33Z)-hexatriacontapentaenoyl-CoA + malonyl-CoA + H(+) = 3-oxo-(23Z,26Z,29Z,32Z,35Z)-octatriacontapentaenoyl-CoA + CO2 + CoA. It catalyses the reaction (11Z,14Z,17Z,20Z)-hexacosatetraenoyl-CoA + malonyl-CoA + H(+) = (13Z,16Z,19Z,22Z)-3-oxooctacosatetraenoyl-CoA + CO2 + CoA. The catalysed reaction is (13Z,16Z,19Z,22Z)-octacosatetraenoyl-CoA + malonyl-CoA + H(+) = 3-oxo-(15Z,18Z,21Z,24Z)-triacontatetraenoyl-CoA + CO2 + CoA. The enzyme catalyses (15Z,18Z,21Z,24Z)-triacontatetraenoyl-CoA + malonyl-CoA + H(+) = 3-oxo-(17Z,20Z,23Z,26Z)-dotriacontatetraenoyl-CoA + CO2 + CoA. It carries out the reaction (17Z,20Z,23Z,26Z)-dotriacontatetraenoyl-CoA + malonyl-CoA + H(+) = 3-oxo-(19Z,22Z,25Z,28Z)-tetratriacontatetraenoyl-CoA + CO2 + CoA. It catalyses the reaction (19Z,22Z,25Z,28Z)-tetratriacontatetraenoyl-CoA + malonyl-CoA + H(+) = 3-oxo-(21Z,24Z,27Z,30Z)-hexatriacontatetraenoyl-CoA + CO2 + CoA. The catalysed reaction is (21Z,24Z,27Z,30Z)-hexatriacontatetraenoyl-CoA + malonyl-CoA + H(+) = 3-oxo-(23Z,26Z,29Z,32Z)-octatriacontatetraenoyl-CoA + CO2 + CoA. The enzyme catalyses (6Z,9Z,12Z,15Z,18Z,21Z)-tetracosahexaenoyl-CoA + malonyl-CoA + H(+) = 3-oxo-(8Z,11Z,14Z,17Z,20Z,23Z)-hexacosahexaenoyl-CoA + CO2 + CoA. It carries out the reaction (8Z,11Z,14Z,17Z,20Z,23Z)-hexacosahexaenoyl-CoA + malonyl-CoA + H(+) = 3-oxo-(10Z,13Z,16Z,19Z,22Z,25Z)-octacosahexaenoyl-CoA + CO2 + CoA. It catalyses the reaction (10Z,13Z,16Z,19Z,22Z,25Z)-octacosahexaenoyl-CoA + malonyl-CoA + H(+) = 3-oxo-(12Z,15Z,18Z,21Z,24Z,27Z)-triacontahexaenoyl-CoA + CO2 + CoA. The catalysed reaction is (12Z,15Z,18Z,21Z,24Z,27Z)-triacontahexaenoyl-CoA + malonyl-CoA + H(+) = 3-oxo-(14Z,17Z,20Z,23Z,26Z,29Z)-dotriacontahexaenoyl-CoA + CO2 + CoA. The enzyme catalyses (14Z,17Z,20Z,23Z,26Z,29Z)-dotriacontahexaenoyl-CoA + malonyl-CoA + H(+) = 3-oxo-(16Z,19Z,22Z,25Z,28Z,31Z)-tetratriacontahexaenoyl-CoA + CO2 + CoA. It carries out the reaction (16Z,19Z,22Z,25Z,28Z,31Z)-tetratriacontahexaenoyl-CoA + malonyl-CoA + H(+) = 3-oxo-(18Z,21Z,24Z,27Z,30Z,33Z)-hexatriacontahexaenoyl-CoA + CO2 + CoA. It catalyses the reaction (9Z,12Z,15Z,18Z,21Z)-tetracosapentaenoyl-CoA + malonyl-CoA + H(+) = 3-oxo-(11Z,14Z,17Z,20Z,23Z)-hexacosapentaenoyl-CoA + CO2 + CoA. It functions in the pathway lipid metabolism; fatty acid biosynthesis. Functionally, catalyzes the first and rate-limiting reaction of the four reactions that constitute the long-chain fatty acids elongation cycle. This endoplasmic reticulum-bound enzymatic process allows the addition of 2 carbons to the chain of long- and very long-chain fatty acids (VLCFAs) per cycle. Condensing enzyme that catalyzes the synthesis of very long chain saturated (VLC-SFA) and polyunsaturated (PUFA) fatty acids that are involved in multiple biological processes as precursors of membrane lipids and lipid mediators. May play a critical role in early brain and skin development. The polypeptide is Very long chain fatty acid elongase 4 (Macaca fascicularis (Crab-eating macaque)).